Reading from the N-terminus, the 147-residue chain is NADPH-dependent 7-cyano-7-deazaguanine reductase (147 aa).

The interval 1-23 (MQTTHLGKNSPIPQSPEEASLDY) is disordered. The active-site Thioimide intermediate is the Cys-46. Asp-53 serves as the catalytic Proton donor. Residues 68–70 (VES) and 87–88 (HE) each bind substrate.

It belongs to the GTP cyclohydrolase I family. QueF type 1 subfamily.

It localises to the cytoplasm. It carries out the reaction 7-aminomethyl-7-carbaguanine + 2 NADP(+) = 7-cyano-7-deazaguanine + 2 NADPH + 3 H(+). It participates in tRNA modification; tRNA-queuosine biosynthesis. Functionally, catalyzes the NADPH-dependent reduction of 7-cyano-7-deazaguanine (preQ0) to 7-aminomethyl-7-deazaguanine (preQ1). This is NADPH-dependent 7-cyano-7-deazaguanine reductase from Zymomonas mobilis subsp. mobilis (strain ATCC 31821 / ZM4 / CP4).